A 239-amino-acid chain; its full sequence is MVIKAQSPAGFAEEYIIESIWNNRFPPGTILPAERELSELIGVTRTTLREVLQRLARDGWLTIQHGKPTKVNNFWETSGLNILETLARLDHESVPQLIDNLLSVRTNISTIFIRTAFRQHPDKAQEVLATANEVADHADAFAELDYNIFRGLAFASGNPIYGLILNGMKGLYTRIGRHYFANPEARSLALGFYHKLSALCSEGAHDQVYETVRRYGHESGEIWHRMQKNLPGDLAIQGR.

In terms of domain architecture, HTH gntR-type spans 6–74 (QSPAGFAEEY…HGKPTKVNNF (69 aa)). The segment at residues 34-53 (ERELSELIGVTRTTLREVLQ) is a DNA-binding region (H-T-H motif).

Homodimer.

It localises to the cytoplasm. Functionally, multifunctional regulator of fatty acid metabolism. In Shigella flexneri, this protein is Fatty acid metabolism regulator protein.